The primary structure comprises 94 residues: Co-chaperonin GroES (94 aa).

The protein belongs to the GroES chaperonin family. In terms of assembly, heptamer of 7 subunits arranged in a ring. Interacts with the chaperonin GroEL.

The protein resides in the cytoplasm. In terms of biological role, together with the chaperonin GroEL, plays an essential role in assisting protein folding. The GroEL-GroES system forms a nano-cage that allows encapsulation of the non-native substrate proteins and provides a physical environment optimized to promote and accelerate protein folding. GroES binds to the apical surface of the GroEL ring, thereby capping the opening of the GroEL channel. The protein is Co-chaperonin GroES of Streptococcus pneumoniae (strain Taiwan19F-14).